A 216-amino-acid chain; its full sequence is Somatotropin (216 aa).

A signal peptide spans 1–26; the sequence is MATDSRTSWLLTVSLLCLLWPQEASA. Histidine 45 is a Zn(2+) binding site. Cysteine 78 and cysteine 189 form a disulfide bridge. Serine 131 carries the post-translational modification Phosphoserine. Residue glutamate 198 coordinates Zn(2+). Cysteine 206 and cysteine 214 are oxidised to a cystine.

The protein belongs to the somatotropin/prolactin family.

The protein resides in the secreted. Plays an important role in growth control. Its major role in stimulating body growth is to stimulate the liver and other tissues to secrete IGF1. It stimulates both the differentiation and proliferation of myoblasts. It also stimulates amino acid uptake and protein synthesis in muscle and other tissues. This Mus musculus (Mouse) protein is Somatotropin (Gh1).